Consider the following 75-residue polypeptide: Antimicrobial peptide Meucin-49-1 (75 aa).

The first 22 residues, 1 to 22 (MNKKILLVIFIVTMLIVDEVNS), serve as a signal peptide directing secretion.

This sequence belongs to the non-disulfide-bridged peptide (NDBP) superfamily. Long chain multifunctional peptide (group 2) family. Expressed by the venom gland.

It is found in the secreted. In terms of biological role, antimicrobial peptide. The sequence is that of Antimicrobial peptide Meucin-49-1 from Mesobuthus eupeus (Lesser Asian scorpion).